A 327-amino-acid polypeptide reads, in one-letter code: Trypsin-like protease try-5 (327 aa).

The N-terminal stretch at 1–21 (MRPRIIVFLFQVLVVIKGTKL) is a signal peptide. A Peptidase S1 domain is found at 43–327 (AAGNTGNPTH…KFIVNFINQA (285 aa)). A disulfide bond links C73 and C89. Residues H88 and D173 each act as charge relay system in the active site. N207 carries N-linked (GlcNAc...) asparagine glycosylation. Intrachain disulfides connect C242–C256 and C266–C296. S270 serves as the catalytic Charge relay system.

Belongs to the peptidase S1 family. Specifically expressed in the male gonad including the seminal vesicle, the valve region and the vas deferens.

The protein localises to the secreted. It localises to the cytoplasmic vesicle. The protein resides in the secretory vesicle lumen. With respect to regulation, in the male gonad, probably maintained inactive by swm-1. Its function is as follows. Serine protease which, in males, acts as a promoting signal during mating to activate sperm. In Caenorhabditis elegans, this protein is Trypsin-like protease try-5.